A 248-amino-acid polypeptide reads, in one-letter code: Ribonuclease HII (248 aa).

Residues 29-219 (DIVCGVDEAG…VREAHLRLGT (191 aa)) form the RNase H type-2 domain. A divalent metal cation contacts are provided by D35, E36, and D128.

Belongs to the RNase HII family. Mn(2+) is required as a cofactor. It depends on Mg(2+) as a cofactor.

The protein resides in the cytoplasm. The catalysed reaction is Endonucleolytic cleavage to 5'-phosphomonoester.. Functionally, endonuclease that specifically degrades the RNA of RNA-DNA hybrids. The protein is Ribonuclease HII of Paraburkholderia xenovorans (strain LB400).